A 122-amino-acid polypeptide reads, in one-letter code: MANKSTRLVSRLKRQKRIRKRITGTGERPRLCVFRSSAHIYAQVIDDVTGSTLAAASTLDKEFIENKDKLVGKDAATAIGRLVGARALEKGISKVVFDRNGFLYHGRVKALSDGAREAGLNF.

This sequence belongs to the universal ribosomal protein uL18 family. As to quaternary structure, part of the 50S ribosomal subunit; part of the 5S rRNA/L5/L18/L25 subcomplex. Contacts the 5S and 23S rRNAs.

This is one of the proteins that bind and probably mediate the attachment of the 5S RNA into the large ribosomal subunit, where it forms part of the central protuberance. This Desulforapulum autotrophicum (strain ATCC 43914 / DSM 3382 / VKM B-1955 / HRM2) (Desulfobacterium autotrophicum) protein is Large ribosomal subunit protein uL18.